We begin with the raw amino-acid sequence, 600 residues long: Elongation factor 4 (600 aa).

The 183-residue stretch at 5 to 187 folds into the tr-type G domain; that stretch reads KYIRNFSIVA…EIVEKIPAPE (183 aa). GTP-binding positions include 17 to 22 and 134 to 137; these read DHGKST and NKVD.

Belongs to the TRAFAC class translation factor GTPase superfamily. Classic translation factor GTPase family. LepA subfamily.

The protein resides in the cell membrane. The enzyme catalyses GTP + H2O = GDP + phosphate + H(+). Required for accurate and efficient protein synthesis under certain stress conditions. May act as a fidelity factor of the translation reaction, by catalyzing a one-codon backward translocation of tRNAs on improperly translocated ribosomes. Back-translocation proceeds from a post-translocation (POST) complex to a pre-translocation (PRE) complex, thus giving elongation factor G a second chance to translocate the tRNAs correctly. Binds to ribosomes in a GTP-dependent manner. The chain is Elongation factor 4 from Clostridium perfringens (strain 13 / Type A).